We begin with the raw amino-acid sequence, 123 residues long: Putative iron-sulfur cluster insertion protein ErpA (123 aa).

Positions 51, 115, and 117 each coordinate iron-sulfur cluster.

This sequence belongs to the HesB/IscA family. In terms of assembly, homodimer. Iron-sulfur cluster serves as cofactor.

Its function is as follows. Required for insertion of 4Fe-4S clusters. The protein is Putative iron-sulfur cluster insertion protein ErpA of Burkholderia ambifaria (strain ATCC BAA-244 / DSM 16087 / CCUG 44356 / LMG 19182 / AMMD) (Burkholderia cepacia (strain AMMD)).